A 278-amino-acid polypeptide reads, in one-letter code: MQTLRQQQPIVPSSPGHDPFLIVENVSKIYETPKGPYTVLDGVNLTVQEGEFICVIGHSGCGKSTLLNMVSGFNQPSHGSVRLKGKEIDRPGPDRMVVFQNYALLPWMTAYENVYLAVDCVNPQMREGEKREIVREHLAMVGLTEAAEKKITQISGGMKQRVAIARALSIRPEVLILDEPFGALDAITKEELQEELLKIWNDHRCTVLMITHDIDEALFLADRLVMMTNGPAANIGEIMTIPFPRPRDRERIMEDPQYYDLRNYALDFLYNRFAHDDE.

Residues 21–254 form the ABC transporter domain; sequence LIVENVSKIY…RPRDRERIME (234 aa). 57–64 is an ATP binding site; that stretch reads GHSGCGKS.

This sequence belongs to the ABC transporter superfamily. Nitrate/nitrite/cyanate uptake transporter (NitT) (TC 3.A.1.16) family. The complex is composed of two ATP-binding proteins (CmpC and CmpD), a transmembrane protein (CmpB) and a solute-binding protein (CmpA).

The protein resides in the cell inner membrane. Its function is as follows. Part of the ABC transporter complex CmpABCD involved in bicarbonate transport. Responsible for energy coupling to the transport system. The chain is Bicarbonate transport ATP-binding protein CmpD (cmpD) from Synechococcus elongatus (strain ATCC 33912 / PCC 7942 / FACHB-805) (Anacystis nidulans R2).